The following is a 367-amino-acid chain: Sulfate/thiosulfate import ATP-binding protein CysA 2 (367 aa).

Positions Val-3–Ile-237 constitute an ABC transporter domain. Gly-35–Thr-42 provides a ligand contact to ATP.

Belongs to the ABC transporter superfamily. Sulfate/tungstate importer (TC 3.A.1.6) family. As to quaternary structure, the complex is composed of two ATP-binding proteins (CysA), two transmembrane proteins (CysT and CysW) and a solute-binding protein (CysP).

Its subcellular location is the cell inner membrane. The catalysed reaction is sulfate(out) + ATP + H2O = sulfate(in) + ADP + phosphate + H(+). The enzyme catalyses thiosulfate(out) + ATP + H2O = thiosulfate(in) + ADP + phosphate + H(+). Its function is as follows. Part of the ABC transporter complex CysAWTP involved in sulfate/thiosulfate import. Responsible for energy coupling to the transport system. In Rhizobium meliloti (strain 1021) (Ensifer meliloti), this protein is Sulfate/thiosulfate import ATP-binding protein CysA 2.